We begin with the raw amino-acid sequence, 415 residues long: Protein-lysine N-trimethyltransferase SMYD5 (415 aa).

One can recognise an SET domain in the interval 20–351 (NCVDVRFINN…PGEEICISYL (332 aa)). An MYND-type zinc finger spans residues 95-135 (PHPELCKVRPDRHQACPQCQVMYCSSECRQAAMDQYHKILC). Tyrosine 350 contributes to the S-adenosyl-L-methionine binding site. The interval 388-415 (DMTSEDEEEVEGEGETEGEDMEDEMTDV) is disordered.

The protein belongs to the class V-like SAM-binding methyltransferase superfamily. Expressed at high levels in the ovary and at lower levels in the fin, testis and brain.

It localises to the cytoplasm. The enzyme catalyses L-lysyl-[protein] + 3 S-adenosyl-L-methionine = N(6),N(6),N(6)-trimethyl-L-lysyl-[protein] + 3 S-adenosyl-L-homocysteine + 3 H(+). It carries out the reaction L-lysyl(20)-[histone H4] + 3 S-adenosyl-L-methionine = N(6),N(6),N(6)-trimethyl-L-lysyl(20)-[histone H4] + 3 S-adenosyl-L-homocysteine + 3 H(+). It catalyses the reaction L-lysyl(36)-[histone H3] + 3 S-adenosyl-L-methionine = N(6),N(6),N(6)-trimethyl-L-lysyl(36)-[histone H3] + 3 S-adenosyl-L-homocysteine + 3 H(+). Its function is as follows. Protein-lysine N-trimethyltransferase that specifically catalyzes trimethylation of 'Lys-22' of the RPL40/eL40 subunit of the 60S ribosome, thereby promoting translation elongation and protein synthesis. May also act as a histone methyltransferase in the context of histone octamers, but not on nucleosome substrates: trimethylates 'Lys-36' of histone H3 and 'Lys-20' of histone H4 to form H3K36me3 and H4K20me3, respectively. The histone methyltransferase activity, which is independent of its SET domain, is however unsure in vivo. Plays a crucial role in hematopoiesis during embryogenesis by negatively regulating expression of genes related to both primitive and definitive hematopoiesis. The polypeptide is Protein-lysine N-trimethyltransferase SMYD5 (Danio rerio (Zebrafish)).